Consider the following 217-residue polypeptide: Large ribosomal subunit protein uL1 (217 aa).

It belongs to the universal ribosomal protein uL1 family.

In Candida glabrata (strain ATCC 2001 / BCRC 20586 / JCM 3761 / NBRC 0622 / NRRL Y-65 / CBS 138) (Yeast), this protein is Large ribosomal subunit protein uL1 (RPL10A).